Consider the following 435-residue polypeptide: Methylenetetrahydrofolate--tRNA-(uracil-5-)-methyltransferase TrmFO (435 aa).

Residue 7-12 (GAGLAG) coordinates FAD.

It belongs to the MnmG family. TrmFO subfamily. The cofactor is FAD.

It localises to the cytoplasm. It catalyses the reaction uridine(54) in tRNA + (6R)-5,10-methylene-5,6,7,8-tetrahydrofolate + NADH + H(+) = 5-methyluridine(54) in tRNA + (6S)-5,6,7,8-tetrahydrofolate + NAD(+). The catalysed reaction is uridine(54) in tRNA + (6R)-5,10-methylene-5,6,7,8-tetrahydrofolate + NADPH + H(+) = 5-methyluridine(54) in tRNA + (6S)-5,6,7,8-tetrahydrofolate + NADP(+). In terms of biological role, catalyzes the folate-dependent formation of 5-methyl-uridine at position 54 (M-5-U54) in all tRNAs. The protein is Methylenetetrahydrofolate--tRNA-(uracil-5-)-methyltransferase TrmFO of Thermotoga sp. (strain RQ2).